A 260-amino-acid polypeptide reads, in one-letter code: tRNA pseudouridine synthase A (260 aa).

Asp-52 (nucleophile) is an active-site residue. Position 111 (Tyr-111) interacts with substrate.

It belongs to the tRNA pseudouridine synthase TruA family. In terms of assembly, homodimer.

It catalyses the reaction uridine(38/39/40) in tRNA = pseudouridine(38/39/40) in tRNA. Its function is as follows. Formation of pseudouridine at positions 38, 39 and 40 in the anticodon stem and loop of transfer RNAs. This is tRNA pseudouridine synthase A from Roseobacter denitrificans (strain ATCC 33942 / OCh 114) (Erythrobacter sp. (strain OCh 114)).